The sequence spans 228 residues: UPF0502 protein Rfer_1648 (228 aa).

The protein belongs to the UPF0502 family.

The sequence is that of UPF0502 protein Rfer_1648 from Albidiferax ferrireducens (strain ATCC BAA-621 / DSM 15236 / T118) (Rhodoferax ferrireducens).